The sequence spans 221 residues: Late embryogenesis abundant protein, group 3 (221 aa).

The disordered stretch occupies residues 1 to 221 (MASHQDKASY…KDSSTITRDH (221 aa)). Over residues 33 to 42 (TAQHAKDRAA) the composition is skewed to basic and acidic residues. The segment covering 43–52 (DAAGHAAGKG) has biased composition (low complexity). 2 stretches are compositionally biased toward basic and acidic residues: residues 53–63 (QDAKEATKQKA) and 72–147 (KKTD…KQKA). Positions 212–221 (KDSSTITRDH) are enriched in polar residues.

This sequence belongs to the LEA type 4 family.

This chain is Late embryogenesis abundant protein, group 3 (MGL3), found in Zea mays (Maize).